The primary structure comprises 169 residues: GTP-dependent dephospho-CoA kinase (169 aa).

Asp-45, Asp-64, and Glu-121 together coordinate GTP.

This sequence belongs to the GTP-dependent DPCK family.

It catalyses the reaction 3'-dephospho-CoA + GTP = GDP + CoA + H(+). It functions in the pathway cofactor biosynthesis; coenzyme A biosynthesis. Its function is as follows. Catalyzes the GTP-dependent phosphorylation of the 3'-hydroxyl group of dephosphocoenzyme A to form coenzyme A (CoA). This chain is GTP-dependent dephospho-CoA kinase, found in Methanobrevibacter smithii (strain ATCC 35061 / DSM 861 / OCM 144 / PS).